The primary structure comprises 153 residues: Small ribosomal subunit protein bS16 (153 aa).

Residues 114–153 (ENEPVGEAITPKKKKAKAEDAEAAADAPAEAAAESEAADK) are disordered. The segment covering 137 to 153 (AADAPAEAAAESEAADK) has biased composition (low complexity).

The protein belongs to the bacterial ribosomal protein bS16 family.

In Rhodococcus opacus (strain B4), this protein is Small ribosomal subunit protein bS16.